The primary structure comprises 147 residues: 3-dehydroquinate dehydratase (147 aa).

Tyrosine 24 acts as the Proton acceptor in catalysis. Substrate is bound by residues asparagine 75, histidine 81, and aspartate 88. Catalysis depends on histidine 101, which acts as the Proton donor. Residues 102–103 (IS) and arginine 112 each bind substrate.

Belongs to the type-II 3-dehydroquinase family. In terms of assembly, homododecamer.

It catalyses the reaction 3-dehydroquinate = 3-dehydroshikimate + H2O. Its pathway is metabolic intermediate biosynthesis; chorismate biosynthesis; chorismate from D-erythrose 4-phosphate and phosphoenolpyruvate: step 3/7. In terms of biological role, catalyzes a trans-dehydration via an enolate intermediate. This chain is 3-dehydroquinate dehydratase, found in Cereibacter sphaeroides (strain ATCC 17023 / DSM 158 / JCM 6121 / CCUG 31486 / LMG 2827 / NBRC 12203 / NCIMB 8253 / ATH 2.4.1.) (Rhodobacter sphaeroides).